Consider the following 1284-residue polypeptide: Putative late blight resistance protein homolog R1B-16 (1284 aa).

Residues 533–555 adopt a coiled-coil conformation; it reads PRMNEEIVGFKDVIENLRNQLLN. An NB-ARC domain is found at 534 to 821; that stretch reads RMNEEIVGFK…SESFIKSSEG (288 aa). 567–574 provides a ligand contact to ATP; the sequence is GMPGLGKT. 8 LRR repeats span residues 942-966, 985-1010, 1013-1036, 1085-1107, 1108-1135, 1159-1181, 1182-1206, and 1219-1243; these read FKFL…LFYL, LWNL…VWDM, LRHL…SAKL, PIRL…FCIS, APNL…HLKN, FPQL…ADDA, FPNL…FMDI, and ESVV…NFKL. The HMA domain occupies 1217-1284; that stretch reads CNESVVKSAM…VEKQRKRGML (68 aa).

This sequence belongs to the disease resistance NB-LRR family.

The protein resides in the cytoplasm. It is found in the membrane. Functionally, confers resistance to late blight (Phytophthora infestans) races carrying the avirulence gene Avr1. Resistance proteins guard the plant against pathogens that contain an appropriate avirulence protein via an indirect interaction with this avirulence protein. That triggers a defense system including the hypersensitive response, which restricts the pathogen growth. In Solanum demissum (Wild potato), this protein is Putative late blight resistance protein homolog R1B-16 (R1B-16).